Consider the following 459-residue polypeptide: tRNA modification GTPase MnmE (459 aa).

3 residues coordinate (6S)-5-formyl-5,6,7,8-tetrahydrofolate: Arg-21, Glu-84, and Arg-123. A TrmE-type G domain is found at 219-378 (GVTVALAGAV…LLVLLYNFVL (160 aa)). GTP is bound by residues 229 to 234 (NAGKSS), 248 to 254 (TEHPGTT), and 273 to 276 (DTAG). Mg(2+) is bound by residues Ser-233 and Thr-254. Lys-459 contacts (6S)-5-formyl-5,6,7,8-tetrahydrofolate.

Belongs to the TRAFAC class TrmE-Era-EngA-EngB-Septin-like GTPase superfamily. TrmE GTPase family. In terms of assembly, homodimer. Heterotetramer of two MnmE and two MnmG subunits. It depends on K(+) as a cofactor.

Its subcellular location is the cytoplasm. Its function is as follows. Exhibits a very high intrinsic GTPase hydrolysis rate. Involved in the addition of a carboxymethylaminomethyl (cmnm) group at the wobble position (U34) of certain tRNAs, forming tRNA-cmnm(5)s(2)U34. This Lawsonia intracellularis (strain PHE/MN1-00) protein is tRNA modification GTPase MnmE.